The primary structure comprises 227 residues: Protein p26 (227 aa).

In terms of assembly, self-associates.

It is found in the host cell junction. The protein resides in the host plasmodesma. This is Protein p26 from Lettuce infectious yellows virus (isolate United States/92) (LIYV).